The sequence spans 183 residues: ESX-1 secretion-associated protein EspH (183 aa).

Residues 1-16 (MVDPPGNDDDHGDLDA) show a composition bias toward acidic residues. Positions 1–32 (MVDPPGNDDDHGDLDALDFSAAHTNEASPLDA) are disordered.

The protein is ESX-1 secretion-associated protein EspH of Mycobacterium tuberculosis (strain ATCC 25618 / H37Rv).